The chain runs to 946 residues: Inter-alpha-trypsin inhibitor heavy chain H2 (946 aa).

A signal peptide spans 1–18; the sequence is MKRLTCFFICFFLSEVSG. The propeptide occupies 19-54; that stretch reads FEIPINGLSEFVDYEDLVELAPGKFQLVAENRRYQR. The VIT domain occupies 56–185; the sequence is LPGESEEMME…KVQFELHYQE (130 aa). Residue Ser-60 is modified to Phosphoserine; by FAM20C. N-linked (GlcNAc...) (complex) asparagine glycosylation is present at Asn-118. Cys-261 and Cys-264 are disulfide-bonded. Residues Glu-282 and Glu-283 each carry the 4-carboxyglutamate modification. Positions 308–468 constitute a VWFA domain; that stretch reads PKNILFVIDV…YDFLKRLSNE (161 aa). Asn-445 is a glycosylation site (N-linked (GlcNAc...) asparagine). Ser-466 is modified (phosphoserine; by FAM20C). An intrachain disulfide couples Cys-650 to Cys-651. An O-glycosylated at three sites region spans residues 665-679; sequence STPSWANPSPTPVIS. O-linked (GalNAc...) threonine; partial glycosylation occurs at Thr-666. Residue Ser-673 is glycosylated (O-linked (GalNAc...) serine). O-linked (GalNAc...) threonine glycosylation is found at Thr-675 and Thr-691. Position 702 is an aspartate 1-(chondroitin 4-sulfate)-ester (Asp-702). The propeptide occupies 703–946; it reads PHFIIYLPKS…PQLYSFLKRP (244 aa). The residue at position 886 (Ser-886) is a Phosphoserine; by FAM20C.

In terms of assembly, I-alpha-I plasma protease inhibitors are assembled from one or two heavy chains (HC) and one light chain, bikunin. Inter-alpha-inhibitor (I-alpha-I) is composed of ITIH1/HC1, ITIH2/HC2 and bikunin. Post-translationally, heavy chains are linked to bikunin via chondroitin 4-sulfate esterified to the alpha-carboxyl of the C-terminal aspartate after propeptide cleavage. In terms of processing, N- and O-glycosylated. O-glycosylated with core 1 or possibly core 8 glycans. Phosphorylated by FAM20C in the extracellular medium. Plasma.

Its subcellular location is the secreted. In terms of biological role, may act as a carrier of hyaluronan in serum or as a binding protein between hyaluronan and other matrix protein, including those on cell surfaces in tissues to regulate the localization, synthesis and degradation of hyaluronan which are essential to cells undergoing biological processes. This is Inter-alpha-trypsin inhibitor heavy chain H2 (ITIH2) from Homo sapiens (Human).